A 4043-amino-acid chain; its full sequence is Hybrid PKS-NRPS synthetase thnA (4043 aa).

The Ketosynthase family 3 (KS3) domain occupies 6-440; sequence LEPIAIVGSA…GSNAHAILEE (435 aa). Catalysis depends on for beta-ketoacyl synthase activity residues C179, H319, and H360. The segment at 558 to 894 is malonyl-CoA:ACP transacylase (MAT) domain; it reads VFTGQGAQWA…FSDALGFVWT (337 aa). An N-terminal hotdog fold region spans residues 952–1090; that stretch reads HEILGTILPE…ATVKIILGTP (139 aa). A dehydratase (DH) domain region spans residues 952 to 1256; sequence HEILGTILPE…LSIKTFAPAT (305 aa). The PKS/mFAS DH domain occupies 952 to 1258; it reads HEILGTILPE…IKTFAPATQA (307 aa). The Proton acceptor; for dehydratase activity role is filled by H984. A C-terminal hotdog fold region spans residues 1105-1258; the sequence is LFPIDADRFY…IKTFAPATQA (154 aa). Catalysis depends on D1166, which acts as the Proton donor; for dehydratase activity. Residues 1417 to 1591 are methyltransferase (MT) domain; it reads LASMMKQITH…RKAGFAGVDA (175 aa). The segment at 2146-2320 is ketoreductase (KR) domain; it reads TYLLVGLTGK…GSTFDIGQVA (175 aa). The Carrier 1 domain maps to 2434-2512; the sequence is EQALDILKEC…ELCDRVVDKL (79 aa). S2472 is modified (O-(pantetheine 4'-phosphoryl)serine). A disordered region spans residues 2521–2618; that stretch reads GKQGESQPPA…PPPPEPAVER (98 aa). Over residues 2527-2536 the composition is skewed to low complexity; it reads QPPASTAQPQ. A compositionally biased stretch (pro residues) spans 2537–2547; it reads PVAPKPKPLPV. Residues 2578–2605 are compositionally biased toward polar residues; it reads YSATEASTRSGSPSEATRLSQKVSSKLQ. The interval 2626 to 3067 is condensation (C) domain; sequence IKSVPISLGQ…IPRFSEKQLA (442 aa). The segment at 3092–3496 is adenylation (A) domain; the sequence is QVARENPDKV…GTMVFHSRMA (405 aa). A Carrier 2 domain is found at 3614–3695; that stretch reads TELTETMIQL…EMAQKVEETI (82 aa). At S3655 the chain carries O-(pantetheine 4'-phosphoryl)serine. The reductase (R) domain stretch occupies residues 3736–3954; sequence ITGATGFLSK…DMLPAVLTAQ (219 aa).

This sequence in the C-terminal section; belongs to the NRP synthetase family.

The catalysed reaction is malate + 6 malonyl-CoA + acetyl-CoA + 2 AH2 + 2 S-adenosyl-L-methionine + 5 NADPH + 9 H(+) = trihazone A + 2 A + 2 S-adenosyl-L-homocysteine + 6 CO2 + 5 NADP(+) + 7 CoA + 6 H2O. It participates in secondary metabolite biosynthesis. In terms of biological role, hybrid PKS-NRPS synthetase; part of the gene cluster that produces the tetronate natural products trihazones. The PKS-NRPS synthetase thnA with the help of the trans-enoyl reductase thnE are responsible for the synthesis of the carboxylmethyl containing trihazone A. The PKS portion of thnA synthesizes beta-keto-triene chain from one acetyl-CoA and 6 equivalents of malonyl-CoA, in collaboration with thnE, which selectively reduces the enoyl intermediate during the first and fourth iteration of the PKS. The NRPS domain selects and activates malate, of which the alpha-hydroxyl group attacks the completed polyketide acyl-S-ACP chain to form the ester product. Intramolecular Dieckmann cyclization catalyzed by the terminal reductase domain releases the product as trihazone A from the PKS-NPRS. The pathway begins with the formation of trihazone A by the hybrid PKS-NRPS synthetase thnA and the trans-enoyl reductase thnE. Trihazone A is further decarboxylated by the 2-oxoglutarate-dependent dioxygenase thnC to produce trihazone D. The function of the FAD-dependent monooxygenase thnD has still to be identified. The chain is Hybrid PKS-NRPS synthetase thnA from Trichoderma harzianum (Hypocrea lixii).